A 499-amino-acid chain; its full sequence is Taxadiene 5-alpha hydroxylase (499 aa).

The helical; Signal-anchor transmembrane segment at 22 to 42 (TESFSIALSAIAGILLLLLLF) threads the bilayer. Cys-445 is a heme binding site.

The protein belongs to the cytochrome P450 family. It depends on heme as a cofactor.

Its subcellular location is the membrane. It catalyses the reaction taxa-4(5),11(12)-diene + reduced [NADPH--hemoprotein reductase] + O2 = taxa-4(20),11-dien-5alpha-ol + oxidized [NADPH--hemoprotein reductase] + H2O + H(+). It participates in alkaloid biosynthesis; taxol biosynthesis; taxa-4(20),11-dien-5alpha-ol from geranylgeranyl diphosphate: step 2/2. Its function is as follows. Catalyzes the first oxygenation step of taxol biosynthesis. Can use both taxa-4(5),11(12)-diene and taxa-4(20),11(12)-diene as substrate. The protein is Taxadiene 5-alpha hydroxylase of Taxus cuspidata (Japanese yew).